The following is a 259-amino-acid chain: Phosphate import ATP-binding protein PstB (259 aa).

The ABC transporter domain occupies 11–254 (AEARNLNFYY…PQDKRTEDYI (244 aa)). 43–50 (GPSGCGKS) contacts ATP.

The protein belongs to the ABC transporter superfamily. Phosphate importer (TC 3.A.1.7) family. As to quaternary structure, the complex is composed of two ATP-binding proteins (PstB), two transmembrane proteins (PstC and PstA) and a solute-binding protein (PstS).

Its subcellular location is the cell inner membrane. The enzyme catalyses phosphate(out) + ATP + H2O = ADP + 2 phosphate(in) + H(+). Functionally, part of the ABC transporter complex PstSACB involved in phosphate import. Responsible for energy coupling to the transport system. The polypeptide is Phosphate import ATP-binding protein PstB (Dechloromonas aromatica (strain RCB)).